Consider the following 588-residue polypeptide: ustiloxin B cluster transcription factor ustR (588 aa).

The segment at residues 11–38 is a DNA-binding region (zn(2)-C6 fungal-type); that stretch reads CWTCRLRRKKCNEDGQPCSNCEARGVFC. A disordered region spans residues 68–92; that stretch reads RTRRARATPTNSINGEPRRPSIDMN.

It is found in the nucleus. Its function is as follows. Transcription factor that regulates the expression of the gene cluster that mediates the biosynthesis of ustiloxin B, an antimitotic tetrapeptide. This is ustiloxin B cluster transcription factor ustR from Aspergillus flavus (strain ATCC 200026 / FGSC A1120 / IAM 13836 / NRRL 3357 / JCM 12722 / SRRC 167).